The chain runs to 224 residues: Phosphoribosylformylglycinamidine synthase subunit PurQ (224 aa).

The 221-residue stretch at 4-224 (FGIIVFPGSN…ATDGLAMFIS (221 aa)) folds into the Glutamine amidotransferase type-1 domain. Cys87 (nucleophile) is an active-site residue. Active-site residues include His204 and Glu206.

As to quaternary structure, part of the FGAM synthase complex composed of 1 PurL, 1 PurQ and 2 PurS subunits.

Its subcellular location is the cytoplasm. It catalyses the reaction N(2)-formyl-N(1)-(5-phospho-beta-D-ribosyl)glycinamide + L-glutamine + ATP + H2O = 2-formamido-N(1)-(5-O-phospho-beta-D-ribosyl)acetamidine + L-glutamate + ADP + phosphate + H(+). It carries out the reaction L-glutamine + H2O = L-glutamate + NH4(+). The protein operates within purine metabolism; IMP biosynthesis via de novo pathway; 5-amino-1-(5-phospho-D-ribosyl)imidazole from N(2)-formyl-N(1)-(5-phospho-D-ribosyl)glycinamide: step 1/2. Its function is as follows. Part of the phosphoribosylformylglycinamidine synthase complex involved in the purines biosynthetic pathway. Catalyzes the ATP-dependent conversion of formylglycinamide ribonucleotide (FGAR) and glutamine to yield formylglycinamidine ribonucleotide (FGAM) and glutamate. The FGAM synthase complex is composed of three subunits. PurQ produces an ammonia molecule by converting glutamine to glutamate. PurL transfers the ammonia molecule to FGAR to form FGAM in an ATP-dependent manner. PurS interacts with PurQ and PurL and is thought to assist in the transfer of the ammonia molecule from PurQ to PurL. The chain is Phosphoribosylformylglycinamidine synthase subunit PurQ from Synechocystis sp. (strain ATCC 27184 / PCC 6803 / Kazusa).